Here is a 147-residue protein sequence, read N- to C-terminus: uncharacterized protein (147 aa).

A helical transmembrane segment spans residues 63 to 79 (LFIVACSAVFATIAYIN).

It belongs to the FUN14 family.

The protein resides in the membrane. This is an uncharacterized protein from Schizosaccharomyces pombe (strain 972 / ATCC 24843) (Fission yeast).